The following is a 528-amino-acid chain: Peptide chain release factor 3 (528 aa).

In terms of domain architecture, tr-type G spans Asp10–Arg278. Residues Ser19–Thr26, Asp87–His91, and Asn141–Asp144 each bind GTP.

This sequence belongs to the TRAFAC class translation factor GTPase superfamily. Classic translation factor GTPase family. PrfC subfamily.

It is found in the cytoplasm. In terms of biological role, increases the formation of ribosomal termination complexes and stimulates activities of RF-1 and RF-2. It binds guanine nucleotides and has strong preference for UGA stop codons. It may interact directly with the ribosome. The stimulation of RF-1 and RF-2 is significantly reduced by GTP and GDP, but not by GMP. In Syntrophotalea carbinolica (strain DSM 2380 / NBRC 103641 / GraBd1) (Pelobacter carbinolicus), this protein is Peptide chain release factor 3.